The sequence spans 183 residues: UPF0316 protein GTNG_0803 (183 aa).

Transmembrane regions (helical) follow at residues 5–25 (IVLV…RTIF), 33–53 (LAAF…SIVF), and 59–79 (YIVM…LEDI).

Belongs to the UPF0316 family.

The protein localises to the cell membrane. This Geobacillus thermodenitrificans (strain NG80-2) protein is UPF0316 protein GTNG_0803.